Consider the following 286-residue polypeptide: NADPH-dependent 7-cyano-7-deazaguanine reductase (286 aa).

92 to 94 (IES) contacts substrate. 94–95 (SK) provides a ligand contact to NADPH. Cys194 serves as the catalytic Thioimide intermediate. Asp201 serves as the catalytic Proton donor. Residue 233–234 (HE) participates in substrate binding. An NADPH-binding site is contributed by 262 to 263 (RG).

This sequence belongs to the GTP cyclohydrolase I family. QueF type 2 subfamily. As to quaternary structure, homodimer.

Its subcellular location is the cytoplasm. The catalysed reaction is 7-aminomethyl-7-carbaguanine + 2 NADP(+) = 7-cyano-7-deazaguanine + 2 NADPH + 3 H(+). Its pathway is tRNA modification; tRNA-queuosine biosynthesis. Catalyzes the NADPH-dependent reduction of 7-cyano-7-deazaguanine (preQ0) to 7-aminomethyl-7-deazaguanine (preQ1). This chain is NADPH-dependent 7-cyano-7-deazaguanine reductase, found in Shewanella oneidensis (strain ATCC 700550 / JCM 31522 / CIP 106686 / LMG 19005 / NCIMB 14063 / MR-1).